The primary structure comprises 507 residues: ATP synthase subunit alpha, plastid (507 aa).

Residue 170 to 177 coordinates ATP; the sequence is GDRQTGKT.

Belongs to the ATPase alpha/beta chains family. F-type ATPases have 2 components, CF(1) - the catalytic core - and CF(0) - the membrane proton channel. CF(1) has five subunits: alpha(3), beta(3), gamma(1), delta(1), epsilon(1). CF(0) has four main subunits: a, b, b' and c.

The protein localises to the plastid membrane. It catalyses the reaction ATP + H2O + 4 H(+)(in) = ADP + phosphate + 5 H(+)(out). Functionally, produces ATP from ADP in the presence of a proton gradient across the membrane. The alpha chain is a regulatory subunit. This Cuscuta obtusiflora (Peruvian dodder) protein is ATP synthase subunit alpha, plastid.